Consider the following 119-residue polypeptide: Large ribosomal subunit protein uL18 (119 aa).

Belongs to the universal ribosomal protein uL18 family. Part of the 50S ribosomal subunit; part of the 5S rRNA/L5/L18/L25 subcomplex. Contacts the 5S and 23S rRNAs.

Its function is as follows. This is one of the proteins that bind and probably mediate the attachment of the 5S RNA into the large ribosomal subunit, where it forms part of the central protuberance. In Xanthomonas oryzae pv. oryzae (strain PXO99A), this protein is Large ribosomal subunit protein uL18.